The following is a 47-amino-acid chain: Delta-actitoxin-Ael1a (47 aa).

3 disulfides stabilise this stretch: Cys4–Cys44, Cys6–Cys34, and Cys27–Cys45.

Belongs to the sea anemone sodium channel inhibitory toxin family. Type I subfamily. As to expression, expressed in ectodermal glands. Not expressed in nematocytes.

It is found in the secreted. In terms of biological role, binds specifically to voltage-gated sodium channels (Nav), thereby delaying their inactivation during signal transduction. It strongly stimulates mammalian cardiac muscle contraction. Paralyzes the shore crab (C.maenas) by tetanic contractions after intramuscular injection. The sequence is that of Delta-actitoxin-Ael1a from Anthopleura elegantissima (Green aggregating anemone).